We begin with the raw amino-acid sequence, 172 residues long: Small ribosomal subunit protein uS5 (172 aa).

An S5 DRBM domain is found at 17-80 (LREKMISVNR…DEARRKMVKV (64 aa)).

The protein belongs to the universal ribosomal protein uS5 family. Part of the 30S ribosomal subunit. Contacts proteins S4 and S8.

With S4 and S12 plays an important role in translational accuracy. Its function is as follows. Located at the back of the 30S subunit body where it stabilizes the conformation of the head with respect to the body. The sequence is that of Small ribosomal subunit protein uS5 from Cupriavidus taiwanensis (strain DSM 17343 / BCRC 17206 / CCUG 44338 / CIP 107171 / LMG 19424 / R1) (Ralstonia taiwanensis (strain LMG 19424)).